We begin with the raw amino-acid sequence, 858 residues long: Volume-regulated anion channel subunit LRRC8D (858 aa).

Residues 1 to 22 are Cytoplasmic-facing; the sequence is MFTLAEVASLNDIQPTYRILKP. The helical transmembrane segment at 23-48 threads the bilayer; the sequence is WWDVFMDYLAVVMLMVAIFAGTMQLT. Over 49–163 the chain is Extracellular; it reads KDQVVCLPVL…YHLALPWYSK (115 aa). Cysteines 54 and 354 form a disulfide. Residues 118–137 form a disordered region; sequence AESTFPSQETKKEKRDPTGR. Basic and acidic residues predominate over residues 126–137; the sequence is ETKKEKRDPTGR. The helical transmembrane segment at 164–182 threads the bilayer; that stretch reads YFPYLALIHTIILMVSSNF. Residues 183 to 308 lie on the Cytoplasmic side of the membrane; it reads WFKYPKTCSK…EDSDLIYKLY (126 aa). The interval 221–251 is disordered; the sequence is SEENKQRITGAQTLPKHVSTSSDEGSPSAST. Polar residues predominate over residues 227 to 251; the sequence is RITGAQTLPKHVSTSSDEGSPSAST. Phosphoserine occurs at positions 241, 242, and 246. Residues 309 to 330 form a helical membrane-spanning segment; sequence VVQTLIKTAKFIFILCYTANFV. Over 331–360 the chain is Extracellular; the sequence is NAISFEHVCKPKVEHLTGYEVFECTHNMAY. A helical membrane pass occupies residues 361–386; that stretch reads MLKKLLISYISIICVYGFICLYTLFW. At 387-858 the chain is on the cytoplasmic side; that stretch reads LFRIPLKEYS…DVNVPFANGI (472 aa). LRR repeat units lie at residues 514–534, 538–559, 561–582, 589–609, 612–632, 636–657, 659–680, 684–705, 707–728, 730–751, 753–774, 776–797, and 799–820; these read NLQE…AFSF, HLRC…VYLL, NLRE…IGLE, HLKI…ITDV, HLTK…NSLK, NVAE…IFSL, NLQE…ISFQ, RLTC…ITHV, NLES…VFSL, KLRC…IGLL, NLQH…LFKC, KLRT…ISQL, and QLTQ…LGQC.

The protein belongs to the LRRC8 family. As to quaternary structure, heterohexamer; oligomerizes with other LRRC8 proteins (LRRC8A, LRRC8B, LRRC8C and/or LRRC8E) to form a heterohexamer. In vivo, the subunit composition may depend primarily on expression levels, and heterooligomeric channels containing various proportions of the different LRRC8 proteins may coexist.

The protein resides in the cell membrane. The protein localises to the endoplasmic reticulum membrane. It catalyses the reaction chloride(in) = chloride(out). The enzyme catalyses iodide(out) = iodide(in). It carries out the reaction taurine(out) = taurine(in). Functionally, non-essential component of the volume-regulated anion channel (VRAC, also named VSOAC channel), an anion channel required to maintain a constant cell volume in response to extracellular or intracellular osmotic changes. The VRAC channel conducts iodide better than chloride and can also conduct organic osmolytes like taurine. Plays a redundant role in the efflux of amino acids, such as aspartate, in response to osmotic stress. Channel activity requires LRRC8A plus at least one other family member (LRRC8B, LRRC8C, LRRC8D or LRRC8E); channel characteristics depend on the precise subunit composition. Also acts as a regulator of glucose-sensing in pancreatic beta cells: VRAC currents, generated in response to hypotonicity- or glucose-induced beta cell swelling, depolarize cells, thereby causing electrical excitation, leading to increase glucose sensitivity and insulin secretion. VRAC channels containing LRRC8D inhibit transport of immunoreactive cyclic dinucleotide GMP-AMP (2'-3'-cGAMP), an immune messenger produced in response to DNA virus in the cytosol. The polypeptide is Volume-regulated anion channel subunit LRRC8D (Rattus norvegicus (Rat)).